The sequence spans 640 residues: Scarecrow-like protein 27 (640 aa).

Composition is skewed to low complexity over residues 68–79 (SYSSTTTTLSSS) and 86–98 (TVTN…GDDN). Positions 68-98 (SYSSTTTTLSSSHGGGGTTVTNTTVTAGDDN) are disordered. In terms of domain architecture, GRAS spans 259–639 (GMAGDDQSVI…KELVTVSAWK (381 aa)). A leucine repeat I (LRI) region spans residues 266–331 (SVIIEQLFNA…AEALLSLIHN (66 aa)). The VHIID stretch occupies residues 350–422 (YRSFSETSPF…NRASSLKLTV (73 aa)). A VHIID motif is present at residues 383–387 (IHIID). Residues 438-470 (FTEENLKTFAGEVKIPFEIELLSVELLLNPAYW) form a leucine repeat II (LRII) region. The tract at residues 480-565 (EAIAVNLPVN…RFWVQPSIEK (86 aa)) is PFYRE. Positions 568-639 (MKRHRWIERS…KELVTVSAWK (72 aa)) are SAW.

The protein belongs to the GRAS family. In terms of tissue distribution, expressed in seedlings, roots, cotyledons, leaves and flowers.

It localises to the nucleus. Its function is as follows. Probable transcription factor involved in plant development. This is Scarecrow-like protein 27 (SCL27) from Arabidopsis thaliana (Mouse-ear cress).